A 224-amino-acid chain; its full sequence is Heme response regulator HssR (224 aa).

In terms of domain architecture, Response regulatory spans 3–116 (NCLIVDDDKK…ELLFRIKAVL (114 aa)). At Asp-52 the chain carries 4-aspartylphosphate. Positions 124–222 (DNELQLGNLI…VRGQGYRVDQ (99 aa)) form a DNA-binding region, ompR/PhoB-type.

In terms of processing, phosphorylated by HssS.

It is found in the cytoplasm. In terms of biological role, member of the two-component regulatory system HssS/HssR involved in intracellular heme homeostasis and tempering of staphylococcal virulence. Phosphorylated HssR binds to a direct repeat sequence within hrtAB promoter and activates the expression of hrtAB, an efflux pump, in response to extracellular heme, hemin, hemoglobin or blood. The chain is Heme response regulator HssR (hssR) from Staphylococcus epidermidis (strain ATCC 12228 / FDA PCI 1200).